The primary structure comprises 100 residues: Small ribosomal subunit protein uS14c (100 aa).

Belongs to the universal ribosomal protein uS14 family. Part of the 30S ribosomal subunit.

The protein resides in the plastid. Its subcellular location is the chloroplast. In terms of biological role, binds 16S rRNA, required for the assembly of 30S particles. The polypeptide is Small ribosomal subunit protein uS14c (Pyropia yezoensis (Susabi-nori)).